We begin with the raw amino-acid sequence, 189 residues long: Elongation factor P (189 aa).

This sequence belongs to the elongation factor P family.

It is found in the cytoplasm. The protein operates within protein biosynthesis; polypeptide chain elongation. In terms of biological role, involved in peptide bond synthesis. Stimulates efficient translation and peptide-bond synthesis on native or reconstituted 70S ribosomes in vitro. Probably functions indirectly by altering the affinity of the ribosome for aminoacyl-tRNA, thus increasing their reactivity as acceptors for peptidyl transferase. This Campylobacter lari (strain RM2100 / D67 / ATCC BAA-1060) protein is Elongation factor P.